Here is a 345-residue protein sequence, read N- to C-terminus: N-acetyl-gamma-glutamyl-phosphate reductase (345 aa).

Cys149 is an active-site residue.

Belongs to the NAGSA dehydrogenase family. Type 1 subfamily.

It localises to the cytoplasm. It carries out the reaction N-acetyl-L-glutamate 5-semialdehyde + phosphate + NADP(+) = N-acetyl-L-glutamyl 5-phosphate + NADPH + H(+). It functions in the pathway amino-acid biosynthesis; L-arginine biosynthesis; N(2)-acetyl-L-ornithine from L-glutamate: step 3/4. Catalyzes the NADPH-dependent reduction of N-acetyl-5-glutamyl phosphate to yield N-acetyl-L-glutamate 5-semialdehyde. This Geobacillus stearothermophilus (Bacillus stearothermophilus) protein is N-acetyl-gamma-glutamyl-phosphate reductase.